Reading from the N-terminus, the 392-residue chain is Chaperone protein DnaJ (392 aa).

A J domain is found at 2-67 (DYYTILGVAK…QKRESYDRYG (66 aa)). Residues 149–227 (GVEKELLVSG…CRGQGRIKDK (79 aa)) form a CR-type zinc finger. Zn(2+) contacts are provided by Cys162, Cys165, Cys179, Cys182, Cys201, Cys204, Cys215, and Cys218. CXXCXGXG motif repeat units lie at residues 162–169 (CDACSGSG), 179–186 (CDRCKGSG), 201–208 (CPDCSGEG), and 215–222 (CSVCRGQG).

The protein belongs to the DnaJ family. Homodimer. Zn(2+) serves as cofactor.

It is found in the cytoplasm. Participates actively in the response to hyperosmotic and heat shock by preventing the aggregation of stress-denatured proteins and by disaggregating proteins, also in an autonomous, DnaK-independent fashion. Unfolded proteins bind initially to DnaJ; upon interaction with the DnaJ-bound protein, DnaK hydrolyzes its bound ATP, resulting in the formation of a stable complex. GrpE releases ADP from DnaK; ATP binding to DnaK triggers the release of the substrate protein, thus completing the reaction cycle. Several rounds of ATP-dependent interactions between DnaJ, DnaK and GrpE are required for fully efficient folding. Also involved, together with DnaK and GrpE, in the DNA replication of plasmids through activation of initiation proteins. This is Chaperone protein DnaJ from Chlamydia trachomatis serovar L2 (strain ATCC VR-902B / DSM 19102 / 434/Bu).